The primary structure comprises 538 residues: MTEPTWKTVASEKQQQRESKIPSEWQIPKSSHPAPEVTFVQDFPAKSGMFTNRELQLTAATASDVTAKISTGEWTAVEVTTAVCKRAAVAQQLLNCVTEICFDQAIARAKELDAYFEKEGKTVGPLHGLPISFKDQFNVKGFDSTIGYCSYASKPATADSTLVKLLVKAGAIIYVKSNVPITLMMGESFNNIFGRTLNPRNRELTTGGSSGGEAALVTFCASFLGVGTDIGGSLRIPCSFTGLYGLRPSHGRVSYQHVQNTLLGQEAVRSCAGPMCRAPEDIRLFMSSLAAQQPWLWDPQSLPLPWRAEEEVLPKKLCFGFALGDGHVGPKKLKQAGHAVINFNLTEGKEVNEIMNKMFTADGGAEFQRDTDATGEPLPPTVEYWLGHSSQIKASTVSETWKNQHKKALLAQKFLEKWQATKGRTGTSRPIDGLIMPSTPFPASRHGSGWPWHFGDLSALLDLTTGVFPVTRVNLEKDAVPPSWTPMSVKDKEAMDYYEKPENHENALVGLQLIGRRLEEEKVTAMLTLIRNVLEVDY.

Residues 1–32 (MTEPTWKTVASEKQQQRESKIPSEWQIPKSSH) are disordered. Active-site charge relay system residues include K134 and S209. Catalysis depends on S233, which acts as the Acyl-ester intermediate.

This sequence belongs to the amidase family.

It carries out the reaction a monocarboxylic acid amide + H2O = a monocarboxylate + NH4(+). It participates in secondary metabolite biosynthesis. Its function is as follows. Putative amidase; part of the gene cluster that mediates the biosynthesis of KK-1, a novel cyclic depsipeptide with 10 residues which is a promising active compound with high activity against many plant pathogens, especially Botrytis cinerea. The role of kk1C in KK-1 biosynthesis has still to be determined. The nonribosomal peptide synthetase (NRPS) kk1B catalyzes the elongation and cyclization of the decapeptide chain composed of 1 D-lactic acid residue (D-Lac), 1 pipecolic acid residue (Pip), 1 aspartic acid residue (Asp), 1 isoleucine residue (Ile), 1 glycine residue (Gly), 1 tyrosine residue (Tyr) and 4 valine residues (Val). The Asp, Ile and 3 Val residues are N-methylated by the 5 methyltransferase domains from the NRPS (found in modules 3, 5, 6, 7 and 9), whereas the Tyr residue is O-methylated by the cluster encoded O-methyltransferase kk1A. The thioesterase kk1J is likely to be involved in the corrective mechanism of peptide chain synthesis. The D-lactate dehydrogenase kk1H is involved in the synthesis of D-lactic acid from pyruvic acid, which is recognized by the A domain of the first kk1B module. The pyrroline-5-carboxylate reductase kk1I is involved in the synthesis of the L-pipecolic acid residue of KK-1 from delta-1-pyrroline-5-carboxylate (P5C), a metabolic intermediate of lysine. It is still unclear how kk1C and kk1D are involved in the production of KK-1. This is Putative amidase kk1C from Curvularia clavata.